Reading from the N-terminus, the 185-residue chain is Probable chorismate pyruvate-lyase (185 aa).

Residues Arg-75, Leu-113, and Glu-170 each coordinate substrate.

Belongs to the UbiC family.

The protein resides in the cytoplasm. It carries out the reaction chorismate = 4-hydroxybenzoate + pyruvate. The protein operates within cofactor biosynthesis; ubiquinone biosynthesis. Functionally, removes the pyruvyl group from chorismate, with concomitant aromatization of the ring, to provide 4-hydroxybenzoate (4HB) for the ubiquinone pathway. The chain is Probable chorismate pyruvate-lyase from Coxiella burnetii (strain RSA 493 / Nine Mile phase I).